The chain runs to 617 residues: Elongation factor 4 (617 aa).

The region spanning alanine 17 to valine 198 is the tr-type G domain. Residues aspartate 29–threonine 34 and asparagine 145–aspartate 148 contribute to the GTP site.

It belongs to the TRAFAC class translation factor GTPase superfamily. Classic translation factor GTPase family. LepA subfamily.

The protein localises to the cell membrane. It carries out the reaction GTP + H2O = GDP + phosphate + H(+). Required for accurate and efficient protein synthesis under certain stress conditions. May act as a fidelity factor of the translation reaction, by catalyzing a one-codon backward translocation of tRNAs on improperly translocated ribosomes. Back-translocation proceeds from a post-translocation (POST) complex to a pre-translocation (PRE) complex, thus giving elongation factor G a second chance to translocate the tRNAs correctly. Binds to ribosomes in a GTP-dependent manner. This chain is Elongation factor 4, found in Arthrobacter sp. (strain FB24).